Consider the following 339-residue polypeptide: Methionine import ATP-binding protein MetN 2 (339 aa).

The 240-residue stretch at 2–241 (ISFNNVSKVY…PKTTTTQNFV (240 aa)) folds into the ABC transporter domain. 38–45 (GFSGAGKS) contributes to the ATP binding site.

The protein belongs to the ABC transporter superfamily. Methionine importer (TC 3.A.1.24) family. In terms of assembly, the complex is composed of two ATP-binding proteins (MetN), two transmembrane proteins (MetI) and a solute-binding protein (MetQ).

It is found in the cell membrane. It carries out the reaction L-methionine(out) + ATP + H2O = L-methionine(in) + ADP + phosphate + H(+). It catalyses the reaction D-methionine(out) + ATP + H2O = D-methionine(in) + ADP + phosphate + H(+). Functionally, part of the ABC transporter complex MetNIQ involved in methionine import. Responsible for energy coupling to the transport system. The chain is Methionine import ATP-binding protein MetN 2 from Bacillus anthracis.